The primary structure comprises 460 residues: UDP-N-acetylmuramoyl-tripeptide--D-alanyl-D-alanine ligase (460 aa).

115–121 (GSSGKTS) contributes to the ATP binding site.

This sequence belongs to the MurCDEF family. MurF subfamily.

The protein localises to the cytoplasm. It carries out the reaction D-alanyl-D-alanine + UDP-N-acetyl-alpha-D-muramoyl-L-alanyl-gamma-D-glutamyl-meso-2,6-diaminopimelate + ATP = UDP-N-acetyl-alpha-D-muramoyl-L-alanyl-gamma-D-glutamyl-meso-2,6-diaminopimeloyl-D-alanyl-D-alanine + ADP + phosphate + H(+). It functions in the pathway cell wall biogenesis; peptidoglycan biosynthesis. In terms of biological role, involved in cell wall formation. Catalyzes the final step in the synthesis of UDP-N-acetylmuramoyl-pentapeptide, the precursor of murein. This Buchnera aphidicola subsp. Baizongia pistaciae (strain Bp) protein is UDP-N-acetylmuramoyl-tripeptide--D-alanyl-D-alanine ligase.